The primary structure comprises 339 residues: MKLAIVAGDGIGPEVVAQAVKILDVVQPGVEKTNYDLGARRFHATGEILPDSVIAELREHDAILLGAIGDPSVPSGVLERGLLLRLRFELDYHINLRPGRLYPGVKSPLALEPGNPEIDFVVVREGTEGPYTGNGGAIRVGTANEVATEVSVNTAFGVRRVVRDAFERAMRRRKHLTLVHKNNVLTFAGSLWWRTVQEIGEEYPDVELAYQHVDAATIHMVTDPGRFDVIVTDNLFGDIITDLAAAVCGGIGLAASGNIDATRTNPSMFEPVHGSAPDIAGQGIADPTAAIMSVSLLLAHLGLDDTASRVDRAVEGYLATRGNERLATAAVGERIAAAL.

Substrate-binding residues include Arg-87, Arg-97, Arg-124, and Asp-214. Mg(2+)-binding residues include Asp-214, Asp-238, and Asp-242. 274–286 contacts NAD(+); sequence GSAPDIAGQGIAD.

It belongs to the isocitrate and isopropylmalate dehydrogenases family. LeuB type 2 subfamily. As to quaternary structure, homodimer. The cofactor is Mg(2+). Mn(2+) serves as cofactor.

It localises to the cytoplasm. The catalysed reaction is (2R,3S)-3-isopropylmalate + NAD(+) = 4-methyl-2-oxopentanoate + CO2 + NADH. It functions in the pathway amino-acid biosynthesis; L-leucine biosynthesis; L-leucine from 3-methyl-2-oxobutanoate: step 3/4. Functionally, catalyzes the oxidation of 3-carboxy-2-hydroxy-4-methylpentanoate (3-isopropylmalate) to 3-carboxy-4-methyl-2-oxopentanoate. The product decarboxylates to 4-methyl-2 oxopentanoate. The protein is 3-isopropylmalate dehydrogenase of Mycobacterium ulcerans (strain Agy99).